We begin with the raw amino-acid sequence, 672 residues long: UvrABC system protein B (672 aa).

The region spanning 26–181 (AGLEDGLAYQ…ILQRLAELQY (156 aa)) is the Helicase ATP-binding domain. 39–46 (GVTGSGKT) contributes to the ATP binding site. Positions 92 to 115 (YYDYYQPEAYVPSSDTYIEKDASI) match the Beta-hairpin motif. Residues 430–592 (QVDDLLSEIK…ITPKSIQKAV (163 aa)) enclose the Helicase C-terminal domain. Residues 631-666 (AKELRKLEEQMYHHARNLEFEEAAAVRDKIQHIRKG) enclose the UVR domain.

It belongs to the UvrB family. In terms of assembly, forms a heterotetramer with UvrA during the search for lesions. Interacts with UvrC in an incision complex.

Its subcellular location is the cytoplasm. Its function is as follows. The UvrABC repair system catalyzes the recognition and processing of DNA lesions. A damage recognition complex composed of 2 UvrA and 2 UvrB subunits scans DNA for abnormalities. Upon binding of the UvrA(2)B(2) complex to a putative damaged site, the DNA wraps around one UvrB monomer. DNA wrap is dependent on ATP binding by UvrB and probably causes local melting of the DNA helix, facilitating insertion of UvrB beta-hairpin between the DNA strands. Then UvrB probes one DNA strand for the presence of a lesion. If a lesion is found the UvrA subunits dissociate and the UvrB-DNA preincision complex is formed. This complex is subsequently bound by UvrC and the second UvrB is released. If no lesion is found, the DNA wraps around the other UvrB subunit that will check the other stand for damage. The polypeptide is UvrABC system protein B (Coxiella burnetii (strain CbuG_Q212) (Coxiella burnetii (strain Q212))).